We begin with the raw amino-acid sequence, 248 residues long: Cell division protein ZapD (248 aa).

The protein belongs to the ZapD family. As to quaternary structure, interacts with FtsZ.

Its subcellular location is the cytoplasm. In terms of biological role, cell division factor that enhances FtsZ-ring assembly. Directly interacts with FtsZ and promotes bundling of FtsZ protofilaments, with a reduction in FtsZ GTPase activity. This Aliivibrio salmonicida (strain LFI1238) (Vibrio salmonicida (strain LFI1238)) protein is Cell division protein ZapD.